The primary structure comprises 547 residues: CTP synthase (547 aa).

The amidoligase domain stretch occupies residues 1-267; sequence MKTKFIFITG…DQKIAIMLRL (267 aa). Ser-14 contributes to the CTP binding site. UTP is bound at residue Ser-14. ATP is bound by residues 15–20 and Asp-72; that span reads SLGKGL. 2 residues coordinate Mg(2+): Asp-72 and Glu-141. CTP is bound by residues 148 to 150, 188 to 193, and Lys-224; these read DIE and KTKPTQ. UTP-binding positions include 188–193 and Lys-224; that span reads KTKPTQ. The Glutamine amidotransferase type-1 domain maps to 292–545; sequence TIGIVGKYVD…IRAAKTHPAG (254 aa). Gly-354 provides a ligand contact to L-glutamine. Cys-381 acts as the Nucleophile; for glutamine hydrolysis in catalysis. Residues 382 to 385, Glu-405, and Arg-473 contribute to the L-glutamine site; that span reads LGMQ. Active-site residues include His-518 and Glu-520.

It belongs to the CTP synthase family. Homotetramer.

The catalysed reaction is UTP + L-glutamine + ATP + H2O = CTP + L-glutamate + ADP + phosphate + 2 H(+). It catalyses the reaction L-glutamine + H2O = L-glutamate + NH4(+). The enzyme catalyses UTP + NH4(+) + ATP = CTP + ADP + phosphate + 2 H(+). It functions in the pathway pyrimidine metabolism; CTP biosynthesis via de novo pathway; CTP from UDP: step 2/2. With respect to regulation, allosterically activated by GTP, when glutamine is the substrate; GTP has no effect on the reaction when ammonia is the substrate. The allosteric effector GTP functions by stabilizing the protein conformation that binds the tetrahedral intermediate(s) formed during glutamine hydrolysis. Inhibited by the product CTP, via allosteric rather than competitive inhibition. Functionally, catalyzes the ATP-dependent amination of UTP to CTP with either L-glutamine or ammonia as the source of nitrogen. Regulates intracellular CTP levels through interactions with the four ribonucleotide triphosphates. The chain is CTP synthase from Nitratidesulfovibrio vulgaris (strain DP4) (Desulfovibrio vulgaris).